A 343-amino-acid chain; its full sequence is N-acetyl-gamma-glutamyl-phosphate reductase (343 aa).

Residue cysteine 147 is part of the active site.

Belongs to the NAGSA dehydrogenase family. Type 1 subfamily.

The protein localises to the cytoplasm. The catalysed reaction is N-acetyl-L-glutamate 5-semialdehyde + phosphate + NADP(+) = N-acetyl-L-glutamyl 5-phosphate + NADPH + H(+). The protein operates within amino-acid biosynthesis; L-arginine biosynthesis; N(2)-acetyl-L-ornithine from L-glutamate: step 3/4. Functionally, catalyzes the NADPH-dependent reduction of N-acetyl-5-glutamyl phosphate to yield N-acetyl-L-glutamate 5-semialdehyde. This Staphylococcus saprophyticus subsp. saprophyticus (strain ATCC 15305 / DSM 20229 / NCIMB 8711 / NCTC 7292 / S-41) protein is N-acetyl-gamma-glutamyl-phosphate reductase.